A 296-amino-acid polypeptide reads, in one-letter code: NAD kinase (296 aa).

The active-site Proton acceptor is the Asp72. Residues 72–73, 146–147, Arg157, Lys174, Asp176, 187–192, and Gln247 contribute to the NAD(+) site; these read DG, ND, and TAYALS.

The protein belongs to the NAD kinase family. A divalent metal cation is required as a cofactor.

It localises to the cytoplasm. The enzyme catalyses NAD(+) + ATP = ADP + NADP(+) + H(+). Involved in the regulation of the intracellular balance of NAD and NADP, and is a key enzyme in the biosynthesis of NADP. Catalyzes specifically the phosphorylation on 2'-hydroxyl of the adenosine moiety of NAD to yield NADP. The sequence is that of NAD kinase from Pseudomonas fluorescens (strain ATCC BAA-477 / NRRL B-23932 / Pf-5).